The chain runs to 238 residues: Ribonuclease 3 (238 aa).

The 131-residue stretch at 4–134 (PRQALLDAFG…LLGAIYLHHG (131 aa)) folds into the RNase III domain. E44 contacts Mg(2+). D48 is a catalytic residue. D120 and E123 together coordinate Mg(2+). E123 is an active-site residue. In terms of domain architecture, DRBM spans 161-229 (DWKTSLQELT…ASAAWKALDV (69 aa)).

The protein belongs to the ribonuclease III family. In terms of assembly, homodimer. Mg(2+) serves as cofactor.

Its subcellular location is the cytoplasm. The catalysed reaction is Endonucleolytic cleavage to 5'-phosphomonoester.. Functionally, digests double-stranded RNA. Involved in the processing of primary rRNA transcript to yield the immediate precursors to the large and small rRNAs (23S and 16S). Processes some mRNAs, and tRNAs when they are encoded in the rRNA operon. Processes pre-crRNA and tracrRNA of type II CRISPR loci if present in the organism. In Mycobacterium leprae (strain TN), this protein is Ribonuclease 3.